A 227-amino-acid polypeptide reads, in one-letter code: Urease accessory protein UreF (227 aa).

This sequence belongs to the UreF family. UreD, UreF and UreG form a complex that acts as a GTP-hydrolysis-dependent molecular chaperone, activating the urease apoprotein by helping to assemble the nickel containing metallocenter of UreC. The UreE protein probably delivers the nickel.

The protein resides in the cytoplasm. In terms of biological role, required for maturation of urease via the functional incorporation of the urease nickel metallocenter. This chain is Urease accessory protein UreF, found in Actinobacillus pleuropneumoniae serotype 3 (strain JL03).